Consider the following 266-residue polypeptide: Undecaprenyl-diphosphatase (266 aa).

7 helical membrane passes run 39 to 59, 86 to 106, 112 to 132, 153 to 173, 189 to 209, 216 to 236, and 246 to 266; these read PGSSLSATIQLGSVLAIVWYF, SIFIGTIPIVLLGGSVKLFVP, VLRSNLSIALVSIVMAFFMYL, LIGFFQALAIFPGVSRSGITI, FSFLLGMPAISLAAIVEFIFS, IGFLPLLVGLMTTFLSSLLAI, and NGLKIFIIYRVIFGVVILLNL.

The protein belongs to the UppP family.

Its subcellular location is the cell inner membrane. It catalyses the reaction di-trans,octa-cis-undecaprenyl diphosphate + H2O = di-trans,octa-cis-undecaprenyl phosphate + phosphate + H(+). Its function is as follows. Catalyzes the dephosphorylation of undecaprenyl diphosphate (UPP). Confers resistance to bacitracin. The protein is Undecaprenyl-diphosphatase of Prochlorococcus marinus (strain MIT 9215).